We begin with the raw amino-acid sequence, 338 residues long: uncharacterized protein (338 aa).

The next 6 membrane-spanning stretches (helical) occupy residues 13-33 (PAYSHVLIAGGIGGATADFLM), 71-91 (GLYSGVCPMLIGSLPATALFF), 110-130 (TLCFLLAGFVGDLFASVVYVP), 176-196 (YGYRATILRDIPFSGFQLLFY), 218-238 (LITGSLAGAGAGFLTTPLDVA), and 301-321 (FRGFGPRIFWTSSQSSLMFVF). Solcar repeat units follow at residues 13–100 (PAYS…TKRH), 108–202 (PETL…LRQV), and 216–328 (RELI…IIRL).

The protein belongs to the mitochondrial carrier (TC 2.A.29) family.

Its subcellular location is the mitochondrion inner membrane. Its function is as follows. Mitochondrial solute carriers shuttle metabolites, nucleotides, and cofactors through the mitochondrial inner membrane. This is an uncharacterized protein from Schizosaccharomyces pombe (strain 972 / ATCC 24843) (Fission yeast).